A 92-amino-acid polypeptide reads, in one-letter code: Small ribosomal subunit protein uS19 (92 aa).

The protein belongs to the universal ribosomal protein uS19 family.

In terms of biological role, protein S19 forms a complex with S13 that binds strongly to the 16S ribosomal RNA. The chain is Small ribosomal subunit protein uS19 from Paramagnetospirillum magneticum (strain ATCC 700264 / AMB-1) (Magnetospirillum magneticum).